The primary structure comprises 383 residues: UDP-N-acetylenolpyruvoylglucosamine reductase (383 aa).

A compositionally biased stretch (basic and acidic residues) spans 1 to 13 (MRTRRDVPADRSG). A disordered region spans residues 1–26 (MRTRRDVPADRSGRSRVSRHPGLSVP). The FAD-binding PCMH-type domain maps to 49 to 215 (LGGPATRLLT…LRVRFELENA (167 aa)). Residue Arg192 is part of the active site. The active-site Proton donor is the Ser271. The active site involves Glu375.

The protein belongs to the MurB family. The cofactor is FAD.

The protein resides in the cytoplasm. The enzyme catalyses UDP-N-acetyl-alpha-D-muramate + NADP(+) = UDP-N-acetyl-3-O-(1-carboxyvinyl)-alpha-D-glucosamine + NADPH + H(+). The protein operates within cell wall biogenesis; peptidoglycan biosynthesis. Its function is as follows. Cell wall formation. This chain is UDP-N-acetylenolpyruvoylglucosamine reductase, found in Streptomyces coelicolor (strain ATCC BAA-471 / A3(2) / M145).